Here is a 165-residue protein sequence, read N- to C-terminus: Regulator of ribonuclease activity A (165 aa).

Belongs to the RraA family. Homotrimer. Binds to both RNA-binding sites in the C-terminal region of Rne and to RhlB.

The protein localises to the cytoplasm. Its function is as follows. Globally modulates RNA abundance by binding to RNase E (Rne) and regulating its endonucleolytic activity. Can modulate Rne action in a substrate-dependent manner by altering the composition of the degradosome. Modulates RNA-binding and helicase activities of the degradosome. The sequence is that of Regulator of ribonuclease activity A from Actinobacillus pleuropneumoniae serotype 5b (strain L20).